We begin with the raw amino-acid sequence, 197 residues long: Probable low-affinity putrescine importer PlaP (197 aa).

5 consecutive transmembrane segments (helical) span residues Gly33–Val53, Val85–Ala105, Ile107–Trp127, Phe140–Leu160, and Ser163–Thr183.

Belongs to the amino acid-polyamine-organocation (APC) superfamily.

The protein resides in the cell inner membrane. The enzyme catalyses putrescine(in) + H(+)(in) = putrescine(out) + H(+)(out). Functionally, putrescine importer. The polypeptide is Probable low-affinity putrescine importer PlaP (plaP) (Klebsiella pneumoniae).